The chain runs to 171 residues: S-ribosylhomocysteine lyase (171 aa).

His-54, His-58, and Cys-128 together coordinate Fe cation.

This sequence belongs to the LuxS family. In terms of assembly, homodimer. Fe cation serves as cofactor.

It carries out the reaction S-(5-deoxy-D-ribos-5-yl)-L-homocysteine = (S)-4,5-dihydroxypentane-2,3-dione + L-homocysteine. Functionally, involved in the synthesis of autoinducer 2 (AI-2) which is secreted by bacteria and is used to communicate both the cell density and the metabolic potential of the environment. The regulation of gene expression in response to changes in cell density is called quorum sensing. Catalyzes the transformation of S-ribosylhomocysteine (RHC) to homocysteine (HC) and 4,5-dihydroxy-2,3-pentadione (DPD). The sequence is that of S-ribosylhomocysteine lyase from Salmonella arizonae (strain ATCC BAA-731 / CDC346-86 / RSK2980).